We begin with the raw amino-acid sequence, 492 residues long: Stage IV sporulation protein A (492 aa).

A Walker A motif; involved in ATP-binding motif is present at residues 24–31; the sequence is GAVRTGKS. 24-31 contributes to the ATP binding site; it reads GAVRTGKS.

It localises to the cytoplasm. The enzyme catalyses ATP + H2O = ADP + phosphate + H(+). Its function is as follows. ATPase. Has a role at an early stage in the morphogenesis of the spore coat outer layers. Directs the assembly of the coat and exosporium to an area around the forespore. The polypeptide is Stage IV sporulation protein A (Bacillus anthracis).